The following is a 161-amino-acid chain: Nucleotide-binding protein Geob_0921 (161 aa).

It belongs to the YajQ family.

Functionally, nucleotide-binding protein. In Geotalea daltonii (strain DSM 22248 / JCM 15807 / FRC-32) (Geobacter daltonii), this protein is Nucleotide-binding protein Geob_0921.